Here is a 380-residue protein sequence, read N- to C-terminus: 3-dehydroquinate synthase (380 aa).

Residues 68–73 (PGEPNK), 102–106 (GTVLD), 126–127 (TT), Lys-139, and Lys-148 each bind NAD(+). Zn(2+) contacts are provided by Glu-181, His-243, and His-259.

Belongs to the sugar phosphate cyclases superfamily. Dehydroquinate synthase family. The cofactor is NAD(+). Requires Co(2+) as cofactor. Zn(2+) serves as cofactor.

Its subcellular location is the cytoplasm. The enzyme catalyses 7-phospho-2-dehydro-3-deoxy-D-arabino-heptonate = 3-dehydroquinate + phosphate. It functions in the pathway metabolic intermediate biosynthesis; chorismate biosynthesis; chorismate from D-erythrose 4-phosphate and phosphoenolpyruvate: step 2/7. Its function is as follows. Catalyzes the conversion of 3-deoxy-D-arabino-heptulosonate 7-phosphate (DAHP) to dehydroquinate (DHQ). The sequence is that of 3-dehydroquinate synthase (aroB) from Chlamydia pneumoniae (Chlamydophila pneumoniae).